Here is a 181-residue protein sequence, read N- to C-terminus: Glutamyl-tRNA(Gln) amidotransferase subunit C, chloroplastic/mitochondrial (181 aa).

It belongs to the GatC family. As to quaternary structure, subunit of the heterotrimeric GatCAB amidotransferase (AdT) complex, composed of A, B and C subunits.

The protein resides in the mitochondrion. It localises to the plastid. The protein localises to the chloroplast. It carries out the reaction L-glutamyl-tRNA(Gln) + L-glutamine + ATP + H2O = L-glutaminyl-tRNA(Gln) + L-glutamate + ADP + phosphate + H(+). Allows the formation of correctly charged Gln-tRNA(Gln) through the transamidation of misacylated Glu-tRNA(Gln) in chloroplasts and mitochondria. The reaction takes place in the presence of glutamine and ATP through an activated gamma-phospho-Glu-tRNA(Gln). The sequence is that of Glutamyl-tRNA(Gln) amidotransferase subunit C, chloroplastic/mitochondrial from Picea sitchensis (Sitka spruce).